Consider the following 90-residue polypeptide: Elongation factor 1-beta (90 aa).

This sequence belongs to the EF-1-beta/EF-1-delta family.

Functionally, promotes the exchange of GDP for GTP in EF-1-alpha/GDP, thus allowing the regeneration of EF-1-alpha/GTP that could then be used to form the ternary complex EF-1-alpha/GTP/AAtRNA. The protein is Elongation factor 1-beta of Desulfurococcus amylolyticus (strain DSM 18924 / JCM 16383 / VKM B-2413 / 1221n) (Desulfurococcus kamchatkensis).